A 462-amino-acid polypeptide reads, in one-letter code: Notoamide biosynthesis cluster protein O' (462 aa).

The next 3 helical transmembrane spans lie at 16-36, 55-75, and 79-99; these read IFNVSVVAVCAFIAPGLWAAM, AVIFCLQVVVCVFGSSLIAKI, and WAFALGMVGFPIYASSVYCNV. Residue Asn-102 is glycosylated (N-linked (GlcNAc...) asparagine). 4 helical membrane-spanning segments follow: residues 104-124, 143-163, 173-193, and 233-253; these read SWYIMLACVIDGICSGIFWLT, AYWLASRIMGQMIGGAVTLGV, ISVQTYLVFISIQAIGPFVAA, and ILLLLPMMFQSVFSEAFFSTY. N-linked (GlcNAc...) asparagine glycosylation occurs at Asn-254. The next 4 helical transmembrane spans lie at 265–285, 297–317, 343–363, and 404–424; these read LSSLVASTCVIISNFLLGFFL, MAAFIIIYAFELSLYVYAMVV, VYILMLVGFNLMYDYLYWLIG, and AVAVNLSFFAACIVPSAFVIY. The interval 443 to 462 is disordered; that stretch reads LQTSGEGSHDIMDANGKSDD. The segment covering 449–462 has biased composition (basic and acidic residues); sequence GSHDIMDANGKSDD.

The protein belongs to the unc-93 family.

The protein resides in the membrane. Part of the gene cluster that mediates the biosynthesis of notoamide, a fungal indole alkaloid that belongs to a family of natural products containing a characteristic bicyclo[2.2.2]diazaoctane core. The first step of notoamide biosynthesis involves coupling of L-proline and L-tryptophan by the bimodular NRPS notE', to produce cyclo-L-tryptophan-L-proline called brevianamide F. The reverse prenyltransferase notF' then acts as a deoxybrevianamide E synthase and converts brevianamide F to deoxybrevianamide E via reverse prenylation at C-2 of the indole ring leading to the bicyclo[2.2.2]diazaoctane core. Deoxybrevianamide E is further hydroxylated at C-6 of the indole ring, likely catalyzed by the cytochrome P450 monooxygenase notG', to yield 6-hydroxy-deoxybrevianamide E. 6-hydroxy-deoxybrevianamide E is a specific substrate of the prenyltransferase notC' for normal prenylation at C-7 to produce 6-hydroxy-7-prenyl-deoxybrevianamide, also called notoamide S. As the proposed pivotal branching point in notoamide biosynthesis, notoamide S can be diverted to notoamide E through an oxidative pyran ring closure putatively catalyzed by either notH' cytochrome P450 monooxygenase or the notD' FAD-linked oxidoreductase. This step would be followed by an indole 2,3-epoxidation-initiated pinacol-like rearrangement catalyzed by the notB' FAD-dependent monooxygenase leading to the formation of notoamide C and notoamide D. On the other hand notoamide S is converted to notoamide T by notH' (or notD'), a bifunctional oxidase that also functions as the intramolecular Diels-Alderase responsible for generation of (-)-notoamide T. To generate antipodal (+)-notoaminide T, notH (or notD) in Aspergillus strain MF297-2 is expected to catalyze a Diels-Alder reaction leading to the opposite stereochemistry. The remaining oxidoreductase notD' (or notH') likely catalyzes the oxidative pyran ring formation to yield (-)-stephacidin A. The FAD-dependent monooxygenase notI' is highly similar to notB' and is predicted to catalyze a similar conversion from (-)-stephacidin A to (+)-notoamide B via the 2,3-epoxidation of (-)-stephacidin A followed by a pinacol-type rearrangement. Finally, it remains unclear which enzyme could be responsible for the final hydroxylation steps leading to notoamide A and sclerotiamide. The function of notO' in the notoamide biosynthesis has not been determined yet. The polypeptide is Notoamide biosynthesis cluster protein O' (Aspergillus versicolor).